Consider the following 483-residue polypeptide: Probable glycosyltransferase 6 (483 aa).

Over 1–40 the chain is Cytoplasmic; the sequence is MAASETAPFGVSAASKGGGGVAGARAQHGQLAVAGRVHDA. Residues 41–61 traverse the membrane as a helical; Signal-anchor for type II membrane protein segment; it reads LVFAAGAVAAVLVLLATASFL. At 62–483 the chain is on the lumenal side; it reads SPMPVTNLVA…PLPFDYPAAR (422 aa). N-linked (GlcNAc...) asparagine glycosylation is present at N144.

Belongs to the glycosyltransferase 34 family.

Its subcellular location is the golgi apparatus membrane. Its function is as follows. Probable glycosyltransferase that may be involved in the biosynthesis of xyloglucan. The protein is Probable glycosyltransferase 6 of Oryza sativa subsp. japonica (Rice).